Here is a 273-residue protein sequence, read N- to C-terminus: Ribosomal RNA small subunit methyltransferase A (273 aa).

The S-adenosyl-L-methionine site is built by N18, L20, G45, E66, D91, and N113.

It belongs to the class I-like SAM-binding methyltransferase superfamily. rRNA adenine N(6)-methyltransferase family. RsmA subfamily.

The protein localises to the cytoplasm. The catalysed reaction is adenosine(1518)/adenosine(1519) in 16S rRNA + 4 S-adenosyl-L-methionine = N(6)-dimethyladenosine(1518)/N(6)-dimethyladenosine(1519) in 16S rRNA + 4 S-adenosyl-L-homocysteine + 4 H(+). Specifically dimethylates two adjacent adenosines (A1518 and A1519) in the loop of a conserved hairpin near the 3'-end of 16S rRNA in the 30S particle. May play a critical role in biogenesis of 30S subunits. The chain is Ribosomal RNA small subunit methyltransferase A from Erwinia tasmaniensis (strain DSM 17950 / CFBP 7177 / CIP 109463 / NCPPB 4357 / Et1/99).